A 352-amino-acid chain; its full sequence is Protein-glutamate methylesterase/protein-glutamine glutaminase 2 (352 aa).

The region spanning 1-116 (MVVDDSAVVR…KQFLTDSADE (116 aa)) is the Response regulatory domain. Asp-50 is subject to 4-aspartylphosphate. Residues 162 to 352 (AQTTERIVAI…MAREIVTQLQ (191 aa)) form the CheB-type methylesterase domain. Catalysis depends on residues Ser-174, His-200, and Asp-296.

Belongs to the CheB family. Post-translationally, phosphorylated by CheA. Phosphorylation of the N-terminal regulatory domain activates the methylesterase activity.

Its subcellular location is the cytoplasm. It catalyses the reaction [protein]-L-glutamate 5-O-methyl ester + H2O = L-glutamyl-[protein] + methanol + H(+). It carries out the reaction L-glutaminyl-[protein] + H2O = L-glutamyl-[protein] + NH4(+). In terms of biological role, involved in chemotaxis. Part of a chemotaxis signal transduction system that modulates chemotaxis in response to various stimuli. Catalyzes the demethylation of specific methylglutamate residues introduced into the chemoreceptors (methyl-accepting chemotaxis proteins or MCP) by CheR. Also mediates the irreversible deamidation of specific glutamine residues to glutamic acid. In Xanthomonas euvesicatoria pv. vesicatoria (strain 85-10) (Xanthomonas campestris pv. vesicatoria), this protein is Protein-glutamate methylesterase/protein-glutamine glutaminase 2.